Consider the following 357-residue polypeptide: Putative DNA directed RNA polymerase subunit R470 (357 aa).

Belongs to the archaeal Rpo11/eukaryotic RPB11/RPC19 RNA polymerase subunit family.

The protein localises to the virion. The enzyme catalyses RNA(n) + a ribonucleoside 5'-triphosphate = RNA(n+1) + diphosphate. In Acanthamoeba polyphaga mimivirus (APMV), this protein is Putative DNA directed RNA polymerase subunit R470.